We begin with the raw amino-acid sequence, 116 residues long: Non-specific lipid-transfer protein AP10 (116 aa).

An N-terminal signal peptide occupies residues 1–26 (MKGTSMGVAILAMIVMAQLMVHPSVA). Disulfide bonds link C29/C76, C39/C53, C54/C98, and C74/C112.

The protein belongs to the plant LTP family. As to expression, in germinating seeds, detected in the entire surface of the cotyledons, shoot meristem, inter-cotyledon space, primary xylem and immature vascular elements (at protein level). Expressed in seeds, but not the aerial parts of the plant.

The protein resides in the secreted. It is found in the extracellular space. Its subcellular location is the membrane. In terms of biological role, plant non-specific lipid-transfer proteins transfer phospholipids as well as galactolipids across membranes. May play a role in wax or cutin deposition in the cell walls of expanding epidermal cells and certain secretory tissues. Permeabilizes the membrane of fungal spores, inhibits germination of the spores of the fungus F.solani at a concentration of 40 ug/ml. Inhibits the growth of F.solani with an IC(50) of 6.5 ug/ml, weakly inhibits the growth of the fungus A.alternata. Binds oleoyl-CoA. The sequence is that of Non-specific lipid-transfer protein AP10 from Helianthus annuus (Common sunflower).